Consider the following 478-residue polypeptide: ATP synthase subunit beta (478 aa).

158–165 (GGAGVGKT) serves as a coordination point for ATP.

This sequence belongs to the ATPase alpha/beta chains family. As to quaternary structure, F-type ATPases have 2 components, CF(1) - the catalytic core - and CF(0) - the membrane proton channel. CF(1) has five subunits: alpha(3), beta(3), gamma(1), delta(1), epsilon(1). CF(0) has three main subunits: a(1), b(2) and c(9-12). The alpha and beta chains form an alternating ring which encloses part of the gamma chain. CF(1) is attached to CF(0) by a central stalk formed by the gamma and epsilon chains, while a peripheral stalk is formed by the delta and b chains.

Its subcellular location is the cell inner membrane. The enzyme catalyses ATP + H2O + 4 H(+)(in) = ADP + phosphate + 5 H(+)(out). In terms of biological role, produces ATP from ADP in the presence of a proton gradient across the membrane. The catalytic sites are hosted primarily by the beta subunits. This Rhizobium johnstonii (strain DSM 114642 / LMG 32736 / 3841) (Rhizobium leguminosarum bv. viciae) protein is ATP synthase subunit beta.